Here is a 333-residue protein sequence, read N- to C-terminus: 5-formaminoimidazole-4-carboxamide-1-(beta)-D-ribofuranosyl 5'-monophosphate synthetase (333 aa).

Residues His-20 and Ser-85 each coordinate 5-amino-1-(5-phospho-beta-D-ribosyl)imidazole-4-carboxamide. An ATP-grasp domain is found at 106 to 313; sequence RELIKWEADQ…YFDRPMDMGE (208 aa). ATP-binding positions include 136–187 and Glu-209; that span reads PEEV…VPAY. Asn-229 serves as a coordination point for 5-amino-1-(5-phospho-beta-D-ribosyl)imidazole-4-carboxamide. The Mg(2+) site is built by Glu-268 and Glu-281.

This sequence belongs to the phosphohexose mutase family. It depends on Mg(2+) as a cofactor. Mn(2+) serves as cofactor.

It catalyses the reaction 5-amino-1-(5-phospho-beta-D-ribosyl)imidazole-4-carboxamide + formate + ATP = 5-formamido-1-(5-phospho-D-ribosyl)imidazole-4-carboxamide + ADP + phosphate. Its pathway is purine metabolism; IMP biosynthesis via de novo pathway; 5-formamido-1-(5-phospho-D-ribosyl)imidazole-4-carboxamide from 5-amino-1-(5-phospho-D-ribosyl)imidazole-4-carboxamide (formate route): step 1/1. Its function is as follows. Catalyzes the ATP- and formate-dependent formylation of 5-aminoimidazole-4-carboxamide-1-beta-d-ribofuranosyl 5'-monophosphate (AICAR) to 5-formaminoimidazole-4-carboxamide-1-beta-d-ribofuranosyl 5'-monophosphate (FAICAR) in the absence of folates. The sequence is that of 5-formaminoimidazole-4-carboxamide-1-(beta)-D-ribofuranosyl 5'-monophosphate synthetase from Pyrobaculum islandicum (strain DSM 4184 / JCM 9189 / GEO3).